We begin with the raw amino-acid sequence, 503 residues long: GMP synthase [glutamine-hydrolyzing] (503 aa).

The region spanning 1–178 (MREANVYSEI…LHRAAGIPAD (178 aa)) is the Glutamine amidotransferase type-1 domain. Catalysis depends on C60, which acts as the Nucleophile. Catalysis depends on residues H152 and E154. Positions 179-377 (WNSGNVIADQ…LGLPEVIVGR (199 aa)) constitute a GMPS ATP-PPase domain. ATP is bound at residue 206–212 (SGGVDSA).

Homodimer.

It catalyses the reaction XMP + L-glutamine + ATP + H2O = GMP + L-glutamate + AMP + diphosphate + 2 H(+). It participates in purine metabolism; GMP biosynthesis; GMP from XMP (L-Gln route): step 1/1. Functionally, catalyzes the synthesis of GMP from XMP. The polypeptide is GMP synthase [glutamine-hydrolyzing] (Leifsonia xyli subsp. xyli (strain CTCB07)).